We begin with the raw amino-acid sequence, 336 residues long: MKFVDSATVFVQAGDGGRGCVSFRREKYVPKGGPDGGDGGDGGNVWLRTNSHLTTLLDFKYRKKYLAPRGAHGMGSRKAGRKGKDIVIDVPIGTLVRNAESMEVIADLTRPDEEIMIARGGHGGRGNQHFATSTNQAPRRSEPGWKGEELELAMELKLMADVGLVGFPNAGKSTLISVLSAARPKIADYPFTTLVPNLGIVRYEEYKSFVMADIPGIIEGAAEGRGLGLQFLRHIERTKILALLVSADSPDILAEYGTLVAELEKFGHGLIQKPRLLVVTKMDIAPGDFVVPEAPEGVGLIAVSSVAGKGMKELKDELWRQVSLCERQAEPPEDGE.

The Obg domain occupies 1-159; sequence MKFVDSATVF…LELAMELKLM (159 aa). A disordered region spans residues 120-143; the sequence is GGHGGRGNQHFATSTNQAPRRSEP. Residues 129 to 138 show a composition bias toward polar residues; the sequence is HFATSTNQAP. Residues 160 to 323 form the OBG-type G domain; that stretch reads ADVGLVGFPN…LKDELWRQVS (164 aa). Residues 166-173, 191-195, 213-216, 280-283, and 304-306 contribute to the GTP site; these read GFPNAGKS, FTTLV, DIPG, TKMD, and SSV. Positions 173 and 193 each coordinate Mg(2+).

It belongs to the TRAFAC class OBG-HflX-like GTPase superfamily. OBG GTPase family. Monomer. Mg(2+) serves as cofactor.

The protein localises to the cytoplasm. Its function is as follows. An essential GTPase which binds GTP, GDP and possibly (p)ppGpp with moderate affinity, with high nucleotide exchange rates and a fairly low GTP hydrolysis rate. Plays a role in control of the cell cycle, stress response, ribosome biogenesis and in those bacteria that undergo differentiation, in morphogenesis control. The chain is GTPase Obg from Chlorobium phaeovibrioides (strain DSM 265 / 1930) (Prosthecochloris vibrioformis (strain DSM 265)).